Consider the following 821-residue polypeptide: MSLNLPNPSILGILLVVSTHSGPQLVFQYPPDLSNDSKKSSNLKRTNKTSTLQRKDSDSDELDIDDDDYIADNENDEEFVNADNDEEKEWDSRKMNYYLGTKSDLLSFLDEQEKFRQTSQERNKIYGHKQSDSHIDPDEIKSLHRNSKSGSSDKQIESPKLEASNSNNLKKTISSISDSQKSSTSKASTSGIPPVSPITSSTILGFEADYLCEMLCPPKQMCNSRFEIMIDDLVFLGLPIHSYDNGSWKSKHSHRPKSGKSSKGRSKNAADNASIDEGIDYETTSKSQSKNSMSMFHLVFIMNPPIIECNYRIDEMFHYVISRLSLVLRYEQSKHEYVWNQIRMIYNLKEEFRNQATMANLTKYLTDKSSLCKLISECFTQISRSNIANLSINNKLRSFQIPIKTEFHSLPDSTVPYLPGSHLSSTVNMLANTGLISVGETIRYDVNNLNSGGLDDFDDIDDNKSDSNADDIIYYALLLLDDPETIIRDIKAQQQSTLANFIRMIKPTESLLKLANKLKQQASDNGFSLDAGQIKSFAFHLIYWRRARVILPISTRSVYIVSPMAPITLKFHHDIFIFKKTFPALPSLPHFLKLLSNSSKPRQLATVIPSKDHRDAYLNALSWLIRYGYVTQLHTFIWLKISRKIKMKVEEDLENEGANNKRKKPSATADPNISNKLNAGTDNTSKTESNPEDIQRKMSQLRMINRNNNGNPTSYEQEIDNIEKKLLSPSIGLNLVLEDEGDTIIIDPGRASSLERRWINKVISEECNLSPELTVKFYELLKYMNGKNSLELLLLKENVSRQELRTLLFAIEDHIISVRHW.

Positions 1 to 21 (MSLNLPNPSILGILLVVSTHS) are cleaved as a signal peptide. 4 disordered regions span residues 29 to 64 (YPPD…ELDI), 116 to 194 (RQTS…GIPP), 246 to 283 (GSWK…DYET), and 654 to 694 (ENEG…PEDI). Residues 116 to 142 (RQTSQERNKIYGHKQSDSHIDPDEIKS) show a composition bias toward basic and acidic residues. Positions 170-192 (KKTISSISDSQKSSTSKASTSGI) are enriched in low complexity. Positions 249–266 (KSKHSHRPKSGKSSKGRS) are enriched in basic residues. Residues 669–688 (ADPNISNKLNAGTDNTSKTE) show a composition bias toward polar residues.

This sequence belongs to the NPR3 family.

In terms of biological role, mediates inactivation of the TORC1 complex in response to amino acid starvation. Required for meiotic nuclear division. The polypeptide is Nitrogen permease regulator 3 (NPR3) (Debaryomyces hansenii (strain ATCC 36239 / CBS 767 / BCRC 21394 / JCM 1990 / NBRC 0083 / IGC 2968) (Yeast)).